The sequence spans 357 residues: UDP-N-acetylglucosamine--N-acetylmuramyl-(pentapeptide) pyrophosphoryl-undecaprenol N-acetylglucosamine transferase (357 aa).

Residues threonine 15–glycine 17, asparagine 124, arginine 165, serine 194, and glutamine 288 each bind UDP-N-acetyl-alpha-D-glucosamine.

It belongs to the glycosyltransferase 28 family. MurG subfamily.

Its subcellular location is the cell inner membrane. It catalyses the reaction di-trans,octa-cis-undecaprenyl diphospho-N-acetyl-alpha-D-muramoyl-L-alanyl-D-glutamyl-meso-2,6-diaminopimeloyl-D-alanyl-D-alanine + UDP-N-acetyl-alpha-D-glucosamine = di-trans,octa-cis-undecaprenyl diphospho-[N-acetyl-alpha-D-glucosaminyl-(1-&gt;4)]-N-acetyl-alpha-D-muramoyl-L-alanyl-D-glutamyl-meso-2,6-diaminopimeloyl-D-alanyl-D-alanine + UDP + H(+). It participates in cell wall biogenesis; peptidoglycan biosynthesis. Its function is as follows. Cell wall formation. Catalyzes the transfer of a GlcNAc subunit on undecaprenyl-pyrophosphoryl-MurNAc-pentapeptide (lipid intermediate I) to form undecaprenyl-pyrophosphoryl-MurNAc-(pentapeptide)GlcNAc (lipid intermediate II). The polypeptide is UDP-N-acetylglucosamine--N-acetylmuramyl-(pentapeptide) pyrophosphoryl-undecaprenol N-acetylglucosamine transferase (Trichormus variabilis (strain ATCC 29413 / PCC 7937) (Anabaena variabilis)).